Consider the following 84-residue polypeptide: Large ribosomal subunit protein eL34 (84 aa).

It belongs to the eukaryotic ribosomal protein eL34 family.

This Pyrobaculum calidifontis (strain DSM 21063 / JCM 11548 / VA1) protein is Large ribosomal subunit protein eL34.